A 1102-amino-acid chain; its full sequence is Probable leucine-rich repeat receptor-like protein kinase At5g63930 (1102 aa).

An N-terminal signal peptide occupies residues Met-1 to Gly-26. The Extracellular segment spans residues Leu-27 to Lys-737. N-linked (GlcNAc...) asparagine glycans are attached at residues Asn-54, Asn-68, Asn-79, and Asn-119. 26 LRR repeats span residues Asp-72–Leu-96, Val-97–Cys-120, Ser-122–Leu-144, Val-145–Ser-170, Ser-172–Leu-192, Lys-193–Cys-216, Glu-217–Lys-241, Leu-243–Cys-264, Thr-265–Leu-288, Gln-289–Leu-312, Tyr-314–Ile-336, Glu-337–Leu-360, Lys-361–Tyr-383, Arg-385–Tyr-408, Ser-409–His-432, Ser-433–Cys-456, Thr-458–Gln-480, Val-481–Cys-504, Ser-505–Leu-528, Ser-529–Cys-552, Met-554–Leu-576, Tyr-577–Arg-602, Thr-604–Leu-624, Thr-625–Leu-649, Met-651–Asn-672, and Ser-674–Ser-700. An N-linked (GlcNAc...) asparagine glycan is attached at Asn-180. N-linked (GlcNAc...) asparagine glycosylation occurs at Asn-263. 2 N-linked (GlcNAc...) asparagine glycosylation sites follow: Asn-302 and Asn-311. N-linked (GlcNAc...) asparagine glycosylation occurs at Asn-362. Asn-444 is a glycosylation site (N-linked (GlcNAc...) asparagine). N-linked (GlcNAc...) asparagine glycans are attached at residues Asn-482 and Asn-503. Residues Asn-535, Asn-564, Asn-588, Asn-599, Asn-614, Asn-632, Asn-661, Asn-672, Asn-680, and Asn-695 are each glycosylated (N-linked (GlcNAc...) asparagine). The helical transmembrane segment at Ile-738–Val-758 threads the bilayer. The Cytoplasmic segment spans residues Tyr-759–Pro-1102. A phosphothreonine mark is found at Thr-793 and Thr-801. The Protein kinase domain occupies Phe-804 to Leu-1091. Residues Val-810–Val-818 and Lys-832 each bind ATP. A phosphotyrosine mark is found at Tyr-882 and Tyr-919. Asp-932 serves as the catalytic Proton acceptor. Ser-966 carries the phosphoserine modification. Tyr-974 and Tyr-981 each carry phosphotyrosine. Position 982 is a phosphothreonine (Thr-982).

Belongs to the protein kinase superfamily. Ser/Thr protein kinase family.

It is found in the cell membrane. It catalyses the reaction L-seryl-[protein] + ATP = O-phospho-L-seryl-[protein] + ADP + H(+). The enzyme catalyses L-threonyl-[protein] + ATP = O-phospho-L-threonyl-[protein] + ADP + H(+). This chain is Probable leucine-rich repeat receptor-like protein kinase At5g63930, found in Arabidopsis thaliana (Mouse-ear cress).